A 133-amino-acid chain; its full sequence is Phosphoribosyl-ATP pyrophosphatase (133 aa).

The interval 1–22 is disordered; the sequence is MGKPATKPAPKPSKQQDDKKSD.

It belongs to the PRA-PH family.

The protein resides in the cytoplasm. The enzyme catalyses 1-(5-phospho-beta-D-ribosyl)-ATP + H2O = 1-(5-phospho-beta-D-ribosyl)-5'-AMP + diphosphate + H(+). It participates in amino-acid biosynthesis; L-histidine biosynthesis; L-histidine from 5-phospho-alpha-D-ribose 1-diphosphate: step 2/9. The protein is Phosphoribosyl-ATP pyrophosphatase of Gluconobacter oxydans (strain 621H) (Gluconobacter suboxydans).